The sequence spans 209 residues: Na(+)-translocating NADH-quinone reductase subunit D (209 aa).

5 helical membrane passes run L42–I62, I66–V86, V103–M123, F131–V151, and N178–L198.

Belongs to the NqrDE/RnfAE family. Composed of six subunits; NqrA, NqrB, NqrC, NqrD, NqrE and NqrF.

The protein resides in the cell inner membrane. It catalyses the reaction a ubiquinone + n Na(+)(in) + NADH + H(+) = a ubiquinol + n Na(+)(out) + NAD(+). Functionally, NQR complex catalyzes the reduction of ubiquinone-1 to ubiquinol by two successive reactions, coupled with the transport of Na(+) ions from the cytoplasm to the periplasm. NqrA to NqrE are probably involved in the second step, the conversion of ubisemiquinone to ubiquinol. The chain is Na(+)-translocating NADH-quinone reductase subunit D from Yersinia pseudotuberculosis serotype O:1b (strain IP 31758).